The sequence spans 285 residues: Phosphatidylglycerol--prolipoprotein diacylglyceryl transferase (285 aa).

A run of 4 helical transmembrane segments spans residues 30–50, 67–87, 103–123, and 129–149; these read LEIRWYALSYVFGILFAHWHI, LMLWAVIGIILGGRTAYILLY, WHGGMSMHGGYVGCIIAVSIV, and VRVMPVLDLCACAAPLGLFLG. An a 1,2-diacyl-sn-glycero-3-phospho-(1'-sn-glycerol)-binding site is contributed by Arg150. The next 3 helical transmembrane spans lie at 184 to 204, 213 to 233, and 252 to 272; these read SQVYEAMLEGLLPLLFMSILA, FGVLSHMFGAWYGIVRCAVEF, and GQVLSAPIAVVGIFMLVLTVL.

This sequence belongs to the Lgt family.

It localises to the cell inner membrane. It carries out the reaction L-cysteinyl-[prolipoprotein] + a 1,2-diacyl-sn-glycero-3-phospho-(1'-sn-glycerol) = an S-1,2-diacyl-sn-glyceryl-L-cysteinyl-[prolipoprotein] + sn-glycerol 1-phosphate + H(+). The protein operates within protein modification; lipoprotein biosynthesis (diacylglyceryl transfer). Functionally, catalyzes the transfer of the diacylglyceryl group from phosphatidylglycerol to the sulfhydryl group of the N-terminal cysteine of a prolipoprotein, the first step in the formation of mature lipoproteins. The sequence is that of Phosphatidylglycerol--prolipoprotein diacylglyceryl transferase from Anaplasma marginale (strain Florida).